The following is a 458-amino-acid chain: Transcription factor ORF10 (458 aa).

Residues 38–65 constitute a DNA-binding region (zn(2)-C6 fungal-type); the sequence is CESCRLKKLRCSGHKSGCDRCRSQAMKC. The tract at residues 69–109 is disordered; sequence IGAPSNSSRPKSRSHFQPNFSNMSGTAGTSKAPSPLGNDGV. Polar residues predominate over residues 71–100; it reads APSNSSRPKSRSHFQPNFSNMSGTAGTSKA.

It is found in the nucleus. In terms of biological role, transcription factor that specifically regulates the expression of the gene cluster that mediates the biosynthesis of PR-toxin, a bicyclic sesquiterpene belonging to the eremophilane class and acting as a mycotoxin. The polypeptide is Transcription factor ORF10 (Penicillium roqueforti (strain FM164)).